We begin with the raw amino-acid sequence, 156 residues long: Small ribosomal subunit protein uS7 (156 aa).

It belongs to the universal ribosomal protein uS7 family. As to quaternary structure, part of the 30S ribosomal subunit. Contacts proteins S9 and S11.

Functionally, one of the primary rRNA binding proteins, it binds directly to 16S rRNA where it nucleates assembly of the head domain of the 30S subunit. Is located at the subunit interface close to the decoding center, probably blocks exit of the E-site tRNA. In Pelagibacter ubique (strain HTCC1062), this protein is Small ribosomal subunit protein uS7.